The chain runs to 68 residues: Large ribosomal subunit protein bL32 (68 aa).

It belongs to the bacterial ribosomal protein bL32 family.

The chain is Large ribosomal subunit protein bL32 from Orientia tsutsugamushi (strain Ikeda) (Rickettsia tsutsugamushi).